The chain runs to 98 residues: Small ribosomal subunit protein bS18c (98 aa).

Basic and acidic residues predominate over residues 1–13; it reads MSKQSFDFKRYKP. Residues 1-26 form a disordered region; sequence MSKQSFDFKRYKPEAPSGSRKRPLKK.

It belongs to the bacterial ribosomal protein bS18 family. As to quaternary structure, part of the 30S ribosomal subunit.

Its subcellular location is the plastid. It is found in the chloroplast. This chain is Small ribosomal subunit protein bS18c, found in Gnetum parvifolium (Small-leaved jointfir).